The primary structure comprises 338 residues: tRNA-specific 2-thiouridylase MnmA (338 aa).

ATP contacts are provided by residues 6 to 13 and Met32; that span reads AMSGGVDS. Cys92 functions as the Nucleophile in the catalytic mechanism. Cys92 and Cys186 are disulfide-bonded. Residue Gly116 participates in ATP binding. The interval 134–136 is interaction with tRNA; that stretch reads KDQ. Cys186 functions as the Cysteine persulfide intermediate in the catalytic mechanism. An interaction with tRNA region spans residues 288–289; the sequence is RY.

Belongs to the MnmA/TRMU family.

The protein localises to the cytoplasm. It carries out the reaction S-sulfanyl-L-cysteinyl-[protein] + uridine(34) in tRNA + AH2 + ATP = 2-thiouridine(34) in tRNA + L-cysteinyl-[protein] + A + AMP + diphosphate + H(+). Functionally, catalyzes the 2-thiolation of uridine at the wobble position (U34) of tRNA, leading to the formation of s(2)U34. This chain is tRNA-specific 2-thiouridylase MnmA, found in Campylobacter jejuni subsp. jejuni serotype O:6 (strain 81116 / NCTC 11828).